The primary structure comprises 371 residues: 3-isopropylmalate dehydrogenase (371 aa).

77-90 (GPKWDDNPPHLRPE) contacts NAD(+). Substrate contacts are provided by Arg-97, Arg-107, Arg-135, and Asp-224. The Mg(2+) site is built by Asp-224, Asp-248, and Asp-252. Residue 282–294 (GSAPDIAGMNKAN) coordinates NAD(+).

The protein belongs to the isocitrate and isopropylmalate dehydrogenases family. LeuB type 1 subfamily. Homodimer. Mg(2+) serves as cofactor. It depends on Mn(2+) as a cofactor.

Its subcellular location is the cytoplasm. The enzyme catalyses (2R,3S)-3-isopropylmalate + NAD(+) = 4-methyl-2-oxopentanoate + CO2 + NADH. Its pathway is amino-acid biosynthesis; L-leucine biosynthesis; L-leucine from 3-methyl-2-oxobutanoate: step 3/4. Its function is as follows. Catalyzes the oxidation of 3-carboxy-2-hydroxy-4-methylpentanoate (3-isopropylmalate) to 3-carboxy-4-methyl-2-oxopentanoate. The product decarboxylates to 4-methyl-2 oxopentanoate. The polypeptide is 3-isopropylmalate dehydrogenase (Geobacillus kaustophilus (strain HTA426)).